The following is a 160-amino-acid chain: Cyanate hydratase (160 aa).

Active-site residues include Arg100, Glu103, and Ser126.

This sequence belongs to the cyanase family.

The catalysed reaction is cyanate + hydrogencarbonate + 3 H(+) = NH4(+) + 2 CO2. Its function is as follows. Catalyzes the reaction of cyanate with bicarbonate to produce ammonia and carbon dioxide. This Emericella nidulans (strain FGSC A4 / ATCC 38163 / CBS 112.46 / NRRL 194 / M139) (Aspergillus nidulans) protein is Cyanate hydratase.